A 213-amino-acid chain; its full sequence is Uridine kinase (213 aa).

15–22 is an ATP binding site; sequence GASASGKS.

The protein belongs to the uridine kinase family.

The protein resides in the cytoplasm. The enzyme catalyses uridine + ATP = UMP + ADP + H(+). It carries out the reaction cytidine + ATP = CMP + ADP + H(+). It participates in pyrimidine metabolism; CTP biosynthesis via salvage pathway; CTP from cytidine: step 1/3. The protein operates within pyrimidine metabolism; UMP biosynthesis via salvage pathway; UMP from uridine: step 1/1. The sequence is that of Uridine kinase from Salmonella paratyphi A (strain ATCC 9150 / SARB42).